We begin with the raw amino-acid sequence, 362 residues long: MPTFPQSFPMNGGDGPHSYIHNSSYQKVAIDGVKERTSEAILEKLDLEFLNRNSEENILRIVDFGCSIGPNTFDVVQNIIDTVKQKRLKENKTYIGAPLEFQVCFNDQPNNDFNTLFRTQPFFSRKEYFSVGVPGSFHGRVLPKNSLHIGHTSYTLHWLSNVPQHVCDKKSPALNKSYIQCNNLVDEVTKAYKIQFRKDFGGFLEARAEELVSGGLMILSGQCLPDGIPKALTWQGVVIDMIGDCLMDLAKLGITSKEKIELFSLPTYIPHISEFKANIEQNENFNVETMEEISHPMDYMPLTNDFITSMFRAILNTIIEEHFGEGVVNELFSRLAKRLDKYPIDFKRCKKYVNYFIVLKRK.

6 residues coordinate S-adenosyl-L-homocysteine: Y19, C66, N71, D107, S136, and F137. Mg(2+)-binding residues include N175, E261, and F263.

Belongs to the methyltransferase superfamily. Type-7 methyltransferase family. Homodimer. Mg(2+) is required as a cofactor.

The protein is Probable S-adenosylmethionine-dependent methyltransferase At5g37970 of Arabidopsis thaliana (Mouse-ear cress).